An 847-amino-acid polypeptide reads, in one-letter code: Matrin-3 (847 aa).

Ser-2 carries the N-acetylserine modification. The residue at position 3 (Lys-3) is an N6-acetyllysine; alternate. Lys-3 is covalently cross-linked (Glycyl lysine isopeptide (Lys-Gly) (interchain with G-Cter in SUMO2); alternate). A phosphoserine mark is found at Ser-4, Ser-9, Ser-11, Ser-14, Ser-22, Ser-41, Ser-118, and Ser-126. Glycyl lysine isopeptide (Lys-Gly) (interchain with G-Cter in SUMO2) cross-links involve residues Lys-132 and Lys-146. 2 disordered regions span residues 146 to 174 (KRRRTEEGPTLSYGRDGRSATREPPYRVP) and 187 to 214 (DSFDDRGPSLNPVLDYDHGSRSQESGYY). Thr-150 carries the phosphothreonine modification. Ser-157 is modified (phosphoserine). Tyr-158 carries the post-translational modification Phosphotyrosine. Basic and acidic residues predominate over residues 160–174 (RDGRSATREPPYRVP). Residues Ser-164, Ser-188, and Ser-195 each carry the phosphoserine modification. The segment covering 201–214 (DYDHGSRSQESGYY) has biased composition (basic and acidic residues). Tyr-202 is modified (phosphotyrosine). Phosphoserine is present on residues Ser-206, Ser-208, and Ser-211. Tyr-219 is subject to Phosphotyrosine. The residue at position 234 (Ser-234) is a Phosphoserine. Lys-245 participates in a covalent cross-link: Glycyl lysine isopeptide (Lys-Gly) (interchain with G-Cter in SUMO2). Ser-264 is subject to Phosphoserine. Lys-269 participates in a covalent cross-link: Glycyl lysine isopeptide (Lys-Gly) (interchain with G-Cter in SUMO2). Ser-275 is modified (phosphoserine). Residues 342 to 394 (PFMLQQSTNPAPGILGPPPPSFHLGGPAVGPRGNLGAGNGNLQGPRHMQKGRV) are disordered. An RRM 1 domain is found at 398–473 (RVVHIMDFQR…KPVRVHLSQK (76 aa)). Glycyl lysine isopeptide (Lys-Gly) (interchain with G-Cter in SUMO2) cross-links involve residues Lys-478, Lys-487, and Lys-491. An RRM 2 domain is found at 496 to 571 (RVIHLSNLPH…RCVKVDLSEK (76 aa)). Residues Ser-509 and Ser-511 each carry the phosphoserine modification. A Glycyl lysine isopeptide (Lys-Gly) (interchain with G-Cter in SUMO2) cross-link involves residue Lys-515. Lys-522 is modified (N6-acetyllysine; alternate). A Glycyl lysine isopeptide (Lys-Gly) (interchain with G-Cter in SUMO2); alternate cross-link involves residue Lys-522. The residue at position 533 (Ser-533) is a Phosphoserine. Residues Lys-554 and Lys-555 each participate in a glycyl lysine isopeptide (Lys-Gly) (interchain with G-Cter in SUMO2) cross-link. N6-acetyllysine is present on Lys-571. The segment at 588–786 (KKDKSRKRSY…DEYRIGPYQP (199 aa)) is disordered. Phosphoserine is present on residues Ser-596, Ser-598, Ser-604, and Ser-606. Positions 600 to 643 (DGKESPSDKKSKTDGSQKTESSTEGKEQEEKSGEDGEKDTKDDQ) are enriched in basic and acidic residues. Residues Lys-617 and Lys-630 each participate in a glycyl lysine isopeptide (Lys-Gly) (interchain with G-Cter in SUMO2) cross-link. The segment covering 653-665 (ESEDELLVDEEEA) has biased composition (acidic residues). Phosphoserine occurs at positions 654, 671, 673, and 674. Positions 666-676 (AALLESGSSVG) are enriched in low complexity. Thr-679 bears the Phosphothreonine mark. Ser-689 is subject to Phosphoserine. Positions 689–704 (SDGKKEPSDKAVKKDG) are enriched in basic and acidic residues. Positions 710–718 (AKKKLKKVD) match the Nuclear localization signal motif. Residues Lys-719 and Lys-736 each participate in a glycyl lysine isopeptide (Lys-Gly) (interchain with G-Cter in SUMO2) cross-link. Thr-741 carries the post-translational modification Phosphothreonine. Residues Ser-747, Ser-759, and Ser-766 each carry the phosphoserine modification. Basic and acidic residues predominate over residues 767-780 (DENKDDYTIPDEYR). Lys-770 is covalently cross-linked (Glycyl lysine isopeptide (Lys-Gly) (interchain with G-Cter in SUMO2)). The Matrin-type zinc-finger motif lies at 801 to 832 (FYCKLCSLFYTNEEVAKNTHCSSLPHYQKLKK). Lys-836 bears the N6-acetyllysine; alternate mark. Lys-836 is covalently cross-linked (Glycyl lysine isopeptide (Lys-Gly) (interchain with G-Cter in SUMO2); alternate).

In terms of assembly, part of a complex consisting of SFPQ, NONO and MATR3. Interacts with AGO1 and AGO2. Part of a complex composed at least of ASH2L, EMSY, HCFC1, HSPA8, CCAR2, MATR3, MKI67, RBBP5, TUBB2A, WDR5 and ZNF335; this complex may have a histone H3-specific methyltransferase activity. Interacts with TARDBP. Part of the HDP-RNP complex composed of at least HEXIM1, PRKDC, XRCC5, XRCC6, paraspeckle proteins (SFPQ, NONO, PSPC1, RBM14, and MATR3) and NEAT1 RNA. Interacts with FUS. Interacts with IGF2BP1; the interaction is enhanced by SEPIN14P20 peptide RBPR. Interacts with IGF2BP2 and IGF2BP3. Interacts with RBPMS.

It is found in the nucleus matrix. In terms of biological role, may play a role in transcription or may interact with other nuclear matrix proteins to form the internal fibrogranular network. In association with the SFPQ-NONO heteromer may play a role in nuclear retention of defective RNAs. Plays a role in the regulation of DNA virus-mediated innate immune response by assembling into the HDP-RNP complex, a complex that serves as a platform for IRF3 phosphorylation and subsequent innate immune response activation through the cGAS-STING pathway. Binds to N6-methyladenosine (m6A)-containing mRNAs and contributes to MYC stability by binding to m6A-containing MYC mRNAs. May bind to specific miRNA hairpins. The polypeptide is Matrin-3 (MATR3) (Homo sapiens (Human)).